Reading from the N-terminus, the 271-residue chain is Interleukin-1 alpha (271 aa).

Residues 1–112 (MAKVPDMFED…DSEEEIIKPR (112 aa)) constitute a propeptide that is removed on maturation. Lysine 82 is subject to N6-acetyllysine. The tract at residues 82-86 (KKRRL) is nuclear localization signal (NLS). Phosphoserine is present on serine 87. N-linked (GlcNAc...) asparagine glycosylation is found at asparagine 102 and asparagine 141.

It belongs to the IL-1 family. Monomer. Interacts with TMED10; the interaction mediates the translocation from the cytoplasm into the ERGIC (endoplasmic reticulum-Golgi intermediate compartment) and thereby secretion. Interacts with IL1R1. Interacts with S100A13; this interaction is the first step in the export of IL1A, followed by direct translocation of this complex across the plasma membrane. Post-translationally, acetylated within its nuclear localization sequence, which impacts subcellular localization. Proteolytic processed by CAPN1 in a calcium-dependent manner. Cleavage from 31 kDa precursor to 18 kDa biologically active molecules. In terms of processing, phosphorylated. Phosphorylation greatly enhances susceptibility to digestion and promotes the conversion of pre-IL1A alpha to the biologically active IL1A.

The protein localises to the nucleus. Its subcellular location is the cytoplasm. The protein resides in the secreted. Functionally, cytokine constitutively present intracellularly in nearly all resting non-hematopoietic cells that plays an important role in inflammation and bridges the innate and adaptive immune systems. After binding to its receptor IL1R1 together with its accessory protein IL1RAP, forms the high affinity interleukin-1 receptor complex. Signaling involves the recruitment of adapter molecules such as MYD88, IRAK1 or IRAK4. In turn, mediates the activation of NF-kappa-B and the three MAPK pathways p38, p42/p44 and JNK pathways. Within the cell, acts as an alarmin and cell death results in its liberation in the extracellular space after disruption of the cell membrane to induce inflammation and alert the host to injury or damage. In addition to its role as a danger signal, which occurs when the cytokine is passively released by cell necrosis, directly senses DNA damage and acts as signal for genotoxic stress without loss of cell integrity. The chain is Interleukin-1 alpha (IL1A) from Cercocebus atys (Sooty mangabey).